Here is a 1192-residue protein sequence, read N- to C-terminus: MEAFEISDFKEHAKKKSMWAGALNKVTISGLMGVFTEDEDLMALPIHRDHCPALLKIFDEIIVNATDHERACHSKTKKVTYIKISFNKGVFSCENDGPGIPIAKHEQASLIAKRDVYVPEVASCHFLAGTNINKAKDCIKGGTNGVGLKLAMVHSQWAILTTADGAQKYVQHINQRLDIIEPPTITPSREMFTRIELMPVYQELGYAEPLSETEQADLSAWIYLRACQCAAYVGKGTTIYYNEKPCRTGSVMALAKMYTLLSAPNGTIHTATIKADAKPYSLHPLQVAAVVSPKFKKFEHVSIINGVNCVKGEHVTFLKKTINEIVVKKFQQTIKDKNRKTTLRDSCSNIFIVIVGSIPGIEWTGQRKDELSIAENVFKTHYSIPSSFLTSMTKSIVDILLQSISKKDNHKQVDVDKYTRARNAGGKRAQDCMLLAAEGDSALSLLRTGLTLGKSNPSGPSFDFCGMISLGGVIMNACKKVTNITTDSGETIMVRNEQLTNNKVLQGIVQVLGLDFNCHYKTQEERAKLRYGCIVACVDQDLDGCGKILGLLLAYFHLFWPQLIIHGFVKRLLTPLIRVYEKGKTVPVEFYYEQEFDAWAKKQTSLANHTVKYYKGLAAHDTHEVKSMFKHFDNMVYTFTLDDSAKELFHIYFGGESELRKRELCTGVVPLTETQTQSIHSVRRIPCSLHLQVDTKAYKLDAIERQIPNFLDGMTRARRKILAGGVKCFASNNRERKVFQFGGYVADHMFYHHGDMSLNTSIIKAAQYYPGSSHLYPVFIGIGSFGSRHLGGKDAGSPRYISVQLASEFIKTMFPAEDSWLLPYVFEDGQRAEPEYYVPVLPLAIMEYGANPSEGWKYTTWARQLEDILALVRAYVDKNNPKHELLHYAIKHKITILPLRPSNYNFKGHLKRFGQYYYSYGTYVISEQRNIITITELPLRVPTVAYIESIKKSSNRMTFIEEIIDYSSSETIEILVKLKPNSLNRIMEEFKCTEEQDSIENFLRLRNCLHSHLNFVKPKGGIIEFNTYYEILYAWLPYRRELYQKRLMREHAVLKLRIIMETAIVRYINESAELNLSHYEDEKEASRILSEHGFPPLNQTLIISPEFASIEELNQKALQGCYTYILSLQARELLIAAKTRRVEKIKKMQARLDKVEQLLQESPFPGASVWLEEIDAVEKAIIKGRNTQWKFH.

ATP is bound by residues Asn64, Asn95, and 142–149; that span reads GTNGVGLK. Residues Glu438, Asp539, and Asp541 each coordinate Mg(2+). In terms of domain architecture, Topo IIA-type catalytic spans 707-1174; the sequence is IPNFLDGMTR…PGASVWLEEI (468 aa). The active-site O-(5'-phospho-DNA)-tyrosine intermediate is the Tyr800.

It belongs to the type II topoisomerase family. It depends on Mg(2+) as a cofactor. The cofactor is Mn(2+). Ca(2+) serves as cofactor.

Its subcellular location is the host cytoplasm. It carries out the reaction ATP-dependent breakage, passage and rejoining of double-stranded DNA.. Functionally, type II topoisomerase. Processively relaxes supercoiled DNA. Displays DNA-supercoiling activity only when associated with the viral histone-like protein. In Ornithodoros (relapsing fever ticks), this protein is DNA topoisomerase 2.